The following is a 629-amino-acid chain: Pumilio homolog 3 (629 aa).

Composition is skewed to basic residues over residues 1–10 (MEGKPRKKSF) and 18–37 (PSFKSKGKPGGKPQGKRPFK). The interval 1 to 92 (MEGKPRKKSF…EGDERKKPKW (92 aa)) is disordered. Basic and acidic residues predominate over residues 62–92 (KPTDGKFAKKRKFPGDRIKQEEGDERKKPKW). Residues 88–100 (KKPKWDEFKQKKK) carry the Nuclear localization signal motif. One can recognise a PUM-HD domain in the interval 120–473 (RAKQVWEMVR…ELLEAASPSL (354 aa)). Pumilio repeat units follow at residues 160-195 (HDSTRVLQCFIQFGSDKQRKEVFDELKEHIVELSKS), 196-231 (KYARNIVKKFLMYGSKEQVGEVMLAFKGKVRQMLRH), 232-260 (SEASSVVEYAYNDKAILSQRLMLTEELYG), 272-308 (PTLEKVLEANPGKLESILDEMKQILTPMAQKEAVIKH), 309-344 (SLVHKVFLDFFEHAPDKQRTEMIESIREAVVYMAHT), 345-380 (HDGARVTMHCLWHGTTKDRKVIVKTMKSYIAKFAMG), 381-418 (EYAHLVLLAAFDCIDDTKLVKQIIISEMVSSLSEIISN), 419-487 (KHGK…MVMD), 488-534 (KSCC…MAEH), 535-579 (PAGH…WASV), and 580-618 (NRGAIILCCLLQSADESVAEEVKAMLKSSIPELQRLQNS).

In adult, expressed at high levels in eye and ovary and at lower levels in brain, testis and head kidney. In the adult ovary, prominently expressed in early immature follicles.

It is found in the nucleus. The protein resides in the nucleolus. The protein localises to the nucleoplasm. Its subcellular location is the chromosome. Functionally, inhibits the poly(ADP-ribosyl)ation activity of PARP1 and the degradation of PARP1 by CASP3 following genotoxic stress. Binds to double-stranded RNA or DNA without sequence specificity. Involved in development of the eye and of primordial germ cells. The chain is Pumilio homolog 3 (pum3) from Danio rerio (Zebrafish).